The primary structure comprises 249 residues: Beta-crystallin B1 (249 aa).

A disordered region spans residues 1–49; that stretch reads MSQPAVKASATAAVNPGPDGKGKGAPPPGPAPGSGPAQAPAQPMPAAKG. At serine 2 the chain carries N-acetylserine. Positions 2–55 are N-terminal arm; sequence SQPAVKASATAAVNPGPDGKGKGAPPPGPAPGSGPAQAPAQPMPAAKGDLPPGS. A compositionally biased stretch (low complexity) spans 34-49; the sequence is SGPAQAPAQPMPAAKG. 2 Beta/gamma crystallin 'Greek key' domains span residues 56–95 and 96–140; these read YKLV…IVTS and GPWV…RPIR. A connecting peptide region spans residues 141–145; it reads MDAQE. Beta/gamma crystallin 'Greek key' domains are found at residues 146–187 and 188–230; these read HKLC…RVSS and GTWV…RRLR. The interval 232–249 is C-terminal arm; it reads RQWHREGCFPVLAAEPPK.

This sequence belongs to the beta/gamma-crystallin family. In terms of assembly, homo/heterodimer, or complexes of higher-order. The structure of beta-crystallin oligomers seems to be stabilized through interactions between the N-terminal arms. In terms of processing, specific cleavages in the N-terminal arm occur during lens maturation and give rise to truncated forms, leading to impaired oligomerization and protein insolubilization.

In terms of biological role, crystallins are the dominant structural components of the vertebrate eye lens. The polypeptide is Beta-crystallin B1 (CRYBB1) (Sus scrofa (Pig)).